The sequence spans 574 residues: ATP-dependent RNA helicase RhlB (574 aa).

The Q motif motif lies at 9 to 37 (VTFSSFDLHPALVAGLESAGFTRCTPIQA). Positions 40–220 (LPVALPGGDV…YEHMNEPEKL (181 aa)) constitute a Helicase ATP-binding domain. Residue 53-60 (AQTGTGKT) coordinates ATP. The DEAD box signature appears at 166–169 (DEAD). The region spanning 231–393 (RVRQRIYFPS…PVTSELLTPL (163 aa)) is the Helicase C-terminal domain. Basic and acidic residues predominate over residues 423 to 432 (EQRAAEEQRR). Residues 423 to 574 (EQRAAEEQRR…RRLRSLVSGN (152 aa)) form a disordered region. Over residues 435–449 (GRSGPGGGSRSGSGG) the composition is skewed to gly residues. Residues 477-495 (AAAAQTEKPVVAAAAAQAP) show a composition bias toward low complexity. Residues 506-515 (PRKRRRRRNG) show a composition bias toward basic residues. Composition is skewed to low complexity over residues 523–535 (PAVA…APAA) and 553–562 (SSGSPSLLGR).

It belongs to the DEAD box helicase family. RhlB subfamily. As to quaternary structure, component of the RNA degradosome, which is a multiprotein complex involved in RNA processing and mRNA degradation.

The protein resides in the cytoplasm. It catalyses the reaction ATP + H2O = ADP + phosphate + H(+). DEAD-box RNA helicase involved in RNA degradation. Has RNA-dependent ATPase activity and unwinds double-stranded RNA. The sequence is that of ATP-dependent RNA helicase RhlB from Xanthomonas oryzae pv. oryzae (strain KACC10331 / KXO85).